Consider the following 88-residue polypeptide: Putative membrane protein insertion efficiency factor (88 aa).

It belongs to the UPF0161 family.

It localises to the cell inner membrane. Could be involved in insertion of integral membrane proteins into the membrane. The chain is Putative membrane protein insertion efficiency factor from Coxiella burnetii (strain Dugway 5J108-111).